Consider the following 675-residue polypeptide: Transketolase, chloroplastic (675 aa).

Thiamine diphosphate contacts are provided by residues H78 and 127–129; that span reads GPL. Mg(2+) is bound at residue D168. Residues G169, E173, and N198 each coordinate thiamine diphosphate. N198 and I200 together coordinate Mg(2+). H275 lines the thiamine diphosphate pocket. Residues H275, R369, and S396 each contribute to the substrate site. Thiamine diphosphate-binding positions include E423 and 450-453; that span reads FTDY. E423 functions as the Proton donor in the catalytic mechanism. Substrate is bound by residues H474, D482, and R533.

In terms of assembly, homodimer. Requires Mg(2+) as cofactor. The cofactor is Ca(2+). Mn(2+) is required as a cofactor. It depends on Co(2+) as a cofactor. Thiamine diphosphate serves as cofactor.

The protein localises to the plastid. It is found in the chloroplast thylakoid membrane. The enzyme catalyses D-sedoheptulose 7-phosphate + D-glyceraldehyde 3-phosphate = aldehydo-D-ribose 5-phosphate + D-xylulose 5-phosphate. It participates in carbohydrate biosynthesis; Calvin cycle. Its function is as follows. Catalyzes the reversible transfer of a two-carbon ketol group from fructose-6-phosphate or sedoheptulose-7-phosphate to glyceraldehyde-3-phosphate to yield xylulose-5-phosphate and erythrose-4-phosphate or ribose-5-phosphate, respectively. The sequence is that of Transketolase, chloroplastic from Zea mays (Maize).